The sequence spans 443 residues: MSSSAPSSASPKTFRVKSFGCQMNVYDGERMAELLAAQGMSAAGDGDDADLVVLNTCHIREKATEKVYSDIGRLRRADGSAPLIAVAGCVAQAEGEEIMARAPSVKVVVGPQSYHRLPEMVADAAAGKRSTETDMPAEAKFAALPKRRKSAPTAFLTVQEGCDKFCTYCVVPYTRGAEISRPFSDLVEEAKLLVAGGAREITLLGQNVNAWAGEDDKGRPIGLDGLARALAAEPDLKRIRYTTSHPNDMTDGLIAAHGELEKLMPFLHLPVQAGNDRVLKAMNRSHTADSYMALLERIRAARPDIALSGDFIVGFPGETDAEFEDTLRLVDAVGYAQAFSFKYSARPGTPAATMENHVPVAVMDERLQRLQAALNRDQLAFNKASVGKTCEVLVERRGKHPGQWLGKSPWLQSVHFSGEAEIGDMVTVELIEAGPNSISGRLA.

The region spanning 12–126 (KTFRVKSFGC…LPEMVADAAA (115 aa)) is the MTTase N-terminal domain. [4Fe-4S] cluster is bound by residues C21, C57, C89, C162, C166, and C169. Residues 148–380 (RKSAPTAFLT…QAALNRDQLA (233 aa)) enclose the Radical SAM core domain. Residues 383–443 (KASVGKTCEV…GPNSISGRLA (61 aa)) enclose the TRAM domain.

This sequence belongs to the methylthiotransferase family. MiaB subfamily. In terms of assembly, monomer. [4Fe-4S] cluster serves as cofactor.

It localises to the cytoplasm. The enzyme catalyses N(6)-dimethylallyladenosine(37) in tRNA + (sulfur carrier)-SH + AH2 + 2 S-adenosyl-L-methionine = 2-methylsulfanyl-N(6)-dimethylallyladenosine(37) in tRNA + (sulfur carrier)-H + 5'-deoxyadenosine + L-methionine + A + S-adenosyl-L-homocysteine + 2 H(+). In terms of biological role, catalyzes the methylthiolation of N6-(dimethylallyl)adenosine (i(6)A), leading to the formation of 2-methylthio-N6-(dimethylallyl)adenosine (ms(2)i(6)A) at position 37 in tRNAs that read codons beginning with uridine. The sequence is that of tRNA-2-methylthio-N(6)-dimethylallyladenosine synthase from Novosphingobium aromaticivorans (strain ATCC 700278 / DSM 12444 / CCUG 56034 / CIP 105152 / NBRC 16084 / F199).